The following is an 815-amino-acid chain: MMVGSSSEKKIPLYDEQNDYINEDHISEFAKALVWQDYDDVSTTAPTTPLNGPLDMGDLSLLGGELGNGSDDVVVGDDDDDDDDDDDDDDDDDDDKTKYSSPQLKAAQEINDEATEIGAVPATTKPDLISSKNDWFPINSENLNPNSKRTKFAKSSKSSKSKSTSPIRALQNEFRNSASFTLLRWPILTFVVIWVTILGFLYLAVRVYVALLEYFFTWTGERKRLRDKLRQSTTYKEWIENAKELDKYLGLDKWATNPKFSYYDSQTVQLTINKLKKARLNNSMPELLILLQGCLKRNFAGIENRQLYSHMYYGTKNLVQDYYKEVVICINKVIESNEINSETKYKFFKTVLQNFGKSALCLSGGACFAYTHFGIAKALLDQDLLPNIISGTSGGGLIAALLCTRTNEELKKLLVPQLARKITACEDPWYVWIPRLLKTGARFDSVAWARKSNFFTKGSTTFEEAMAMTGRKLNISTVPADPHSPVILCNDITSPHCIIWSTLLASSAVPGILNPVVLMMKNPVNGAVVPFSLGSKWRDGSLRTDIPIDALNTYYHVNFTIVSQVNPHISLFFFAPKGTVGRPVSMSKRKTAKEKFASFRGGFIATALEQLFRLEIKKWLQIVKSLDLLPHVLQQDWSNVWLQNFTGTITIWPRNRLIDFWYILSDPNEKQMEEIITKGERSMYPKILFIKNRLSIEKAIEKGRKTSTAELRETQMNVALASDDDEDYVPSDYSLAKFKDRIGVTSKDFDMLGSTLRDDDADADVDEDDNEDEDEEDEDENDYEEYDVEDLDDPYESDAFDPHIVLTKERRHTVY.

Positions 41 to 50 (VSTTAPTTPL) are enriched in polar residues. Disordered stretches follow at residues 41–105 (VSTT…PQLK) and 140–166 (SENLNPNSKRTKFAKSSKSSKSKSTSP). The segment covering 54–73 (LDMGDLSLLGGELGNGSDDV) has biased composition (low complexity). The segment covering 74–94 (VVGDDDDDDDDDDDDDDDDDD) has biased composition (acidic residues). Basic residues predominate over residues 148 to 160 (KRTKFAKSSKSSK). The helical transmembrane segment at 185–205 (WPILTFVVIWVTILGFLYLAV) threads the bilayer. The PNPLA domain occupies 360-552 (LCLSGGACFA…RTDIPIDALN (193 aa)). The GXSXG signature appears at 391 to 395 (GTSGG). Residue S393 is the Nucleophile of the active site. Residue D539 is the Proton acceptor of the active site. The interval 753 to 815 (GSTLRDDDAD…LTKERRHTVY (63 aa)) is disordered. Acidic residues predominate over residues 759-799 (DDADADVDEDDNEDEDEEDEDENDYEEYDVEDLDDPYESDA).

This sequence belongs to the PLPL family.

It localises to the membrane. Functionally, probable lipid hydrolase. The sequence is that of Patatin-like phospholipase domain-containing protein LELG_00944 from Lodderomyces elongisporus (strain ATCC 11503 / CBS 2605 / JCM 1781 / NBRC 1676 / NRRL YB-4239) (Yeast).